A 314-amino-acid chain; its full sequence is tRNA dimethylallyltransferase 1 (314 aa).

8-15 serves as a coordination point for ATP; it reads GPTGTGKS. 10–15 provides a ligand contact to substrate; that stretch reads TGTGKS.

This sequence belongs to the IPP transferase family. Monomer. The cofactor is Mg(2+).

It catalyses the reaction adenosine(37) in tRNA + dimethylallyl diphosphate = N(6)-dimethylallyladenosine(37) in tRNA + diphosphate. In terms of biological role, catalyzes the transfer of a dimethylallyl group onto the adenine at position 37 in tRNAs that read codons beginning with uridine, leading to the formation of N6-(dimethylallyl)adenosine (i(6)A). This Mycobacterium marinum (strain ATCC BAA-535 / M) protein is tRNA dimethylallyltransferase 1.